Here is a 145-residue protein sequence, read N- to C-terminus: Halilectin 3, alpha chain (145 aa).

N73 carries an N-linked (GlcNAc...) asparagine glycan.

In terms of assembly, probable heterotrimer consisting of an alpha chain and two beta chains. The alpha chain can probably have different glycosylation states. In terms of processing, glycosylated.

In terms of biological role, lectin with affinity for N-acetyl-galactosamine, carragenan and glycoprotein porcine stomach mucin (PSM). Has metal-independent hemagglutinating activity towards erythrocytes from rabbit and human. Hemagglutinating activity is not inhibited by D-galactose, D-glucose, D-mannose, D-fucose, methyl-alpha-D-galactopyranoside, methyl-alpha-D-glucopyranoside, N-acetyl-glucosamine, N-acetyl-mannosamine, D-fructose, alpha-D-lactose, beta-D-lactose, D-lactulose, D-sucrose, fucoidan or glycoproteins thyroglobulin and ovalmucoid. The polypeptide is Halilectin 3, alpha chain (Haliclona caerulea (Blue Caribbean sponge)).